The following is a 67-amino-acid chain: Large ribosomal subunit protein bL32 (67 aa).

The span at 1–19 shows a compositional bias: basic residues; that stretch reads MAVPKRKMSRSNTRARRSQ. Residues 1-21 are disordered; sequence MAVPKRKMSRSNTRARRSQWK.

Belongs to the bacterial ribosomal protein bL32 family.

The sequence is that of Large ribosomal subunit protein bL32 from Clavibacter michiganensis subsp. michiganensis (strain NCPPB 382).